Consider the following 230-residue polypeptide: Phosphatidylserine decarboxylase proenzyme (230 aa).

Ser186 acts as the Schiff-base intermediate with substrate; via pyruvic acid in catalysis. Residue Ser186 is modified to Pyruvic acid (Ser); by autocatalysis.

Belongs to the phosphatidylserine decarboxylase family. PSD-A subfamily. As to quaternary structure, heterodimer of a large membrane-associated beta subunit and a small pyruvoyl-containing alpha subunit. Requires pyruvate as cofactor. In terms of processing, is synthesized initially as an inactive proenzyme. Formation of the active enzyme involves a self-maturation process in which the active site pyruvoyl group is generated from an internal serine residue via an autocatalytic post-translational modification. Two non-identical subunits are generated from the proenzyme in this reaction, and the pyruvate is formed at the N-terminus of the alpha chain, which is derived from the carboxyl end of the proenzyme. The post-translation cleavage follows an unusual pathway, termed non-hydrolytic serinolysis, in which the side chain hydroxyl group of the serine supplies its oxygen atom to form the C-terminus of the beta chain, while the remainder of the serine residue undergoes an oxidative deamination to produce ammonia and the pyruvoyl prosthetic group on the alpha chain.

The protein localises to the cell membrane. It catalyses the reaction a 1,2-diacyl-sn-glycero-3-phospho-L-serine + H(+) = a 1,2-diacyl-sn-glycero-3-phosphoethanolamine + CO2. It participates in phospholipid metabolism; phosphatidylethanolamine biosynthesis; phosphatidylethanolamine from CDP-diacylglycerol: step 2/2. Functionally, catalyzes the formation of phosphatidylethanolamine (PtdEtn) from phosphatidylserine (PtdSer). The protein is Phosphatidylserine decarboxylase proenzyme of Wolbachia sp. subsp. Brugia malayi (strain TRS).